Here is a 274-residue protein sequence, read N- to C-terminus: NADPH-dependent 7-cyano-7-deazaguanine reductase (274 aa).

80-82 (VES) is a binding site for substrate. Residue 82–83 (SK) coordinates NADPH. Cys-181 acts as the Thioimide intermediate in catalysis. Asp-188 (proton donor) is an active-site residue. 220 to 221 (HE) contributes to the substrate binding site. Residue 249 to 250 (RG) coordinates NADPH.

This sequence belongs to the GTP cyclohydrolase I family. QueF type 2 subfamily. In terms of assembly, homodimer.

Its subcellular location is the cytoplasm. The catalysed reaction is 7-aminomethyl-7-carbaguanine + 2 NADP(+) = 7-cyano-7-deazaguanine + 2 NADPH + 3 H(+). It participates in tRNA modification; tRNA-queuosine biosynthesis. Functionally, catalyzes the NADPH-dependent reduction of 7-cyano-7-deazaguanine (preQ0) to 7-aminomethyl-7-deazaguanine (preQ1). The sequence is that of NADPH-dependent 7-cyano-7-deazaguanine reductase from Paraburkholderia phymatum (strain DSM 17167 / CIP 108236 / LMG 21445 / STM815) (Burkholderia phymatum).